The chain runs to 294 residues: Cell division protein ZipA (294 aa).

Residue Met-1 is a topological domain, periplasmic. A helical membrane pass occupies residues 2–22 (EIGLREWLILIGIIVIAGILF). The Cytoplasmic segment spans residues 23 to 294 (DGWRRMRGGK…FERRALTQKR (272 aa)). Disordered stretches follow at residues 64–111 (THKE…GDLN) and 126–146 (KDDF…STPV). Residues 82–91 (ARERERDPKP) are compositionally biased toward basic and acidic residues.

The protein belongs to the ZipA family. In terms of assembly, interacts with FtsZ via their C-terminal domains.

The protein localises to the cell inner membrane. Essential cell division protein that stabilizes the FtsZ protofilaments by cross-linking them and that serves as a cytoplasmic membrane anchor for the Z ring. Also required for the recruitment to the septal ring of downstream cell division proteins. In Pseudomonas entomophila (strain L48), this protein is Cell division protein ZipA.